A 221-amino-acid chain; its full sequence is Octanoyltransferase (221 aa).

Residues 31 to 213 (DKSADEIWLV…HFVTILGYNK (183 aa)) form the BPL/LPL catalytic domain. Residues 70–77 (RGGQITYH), 142–144 (SLG), and 155–157 (GLA) contribute to the substrate site. The Acyl-thioester intermediate role is filled by cysteine 173.

Belongs to the LipB family.

The protein resides in the cytoplasm. It carries out the reaction octanoyl-[ACP] + L-lysyl-[protein] = N(6)-octanoyl-L-lysyl-[protein] + holo-[ACP] + H(+). Its pathway is protein modification; protein lipoylation via endogenous pathway; protein N(6)-(lipoyl)lysine from octanoyl-[acyl-carrier-protein]: step 1/2. Catalyzes the transfer of endogenously produced octanoic acid from octanoyl-acyl-carrier-protein onto the lipoyl domains of lipoate-dependent enzymes. Lipoyl-ACP can also act as a substrate although octanoyl-ACP is likely to be the physiological substrate. The chain is Octanoyltransferase from Mannheimia succiniciproducens (strain KCTC 0769BP / MBEL55E).